A 179-amino-acid polypeptide reads, in one-letter code: Apoptosis regulator Bcl-2 homolog (179 aa).

A BH1 motif is present at residues 76 to 95; the sequence is ELFKDLINWGRICGFIVFSA. The short motif at 126-141 is the BH2 element; that stretch reads PWMISHGGQEEFLAFS.

Belongs to the Bcl-2 family. As to quaternary structure, interacts with host BECN1 (via BH3 homology domain); this interaction allows the virus to inhibit BECN1, and thus autophagy. Interacts with host BID. Interacts with host BAX.

Its subcellular location is the host mitochondrion. The protein resides in the host endoplasmic reticulum. Suppresses apoptosis in host cell to promote the viral replication. Has the ability to potentially bind to all the members of the proapoptotic Bcl-2 family. Inhibits autophagy by interacting with host Beclin 1 (BECN1). This is Apoptosis regulator Bcl-2 homolog from Ornithodoros (relapsing fever ticks).